The sequence spans 268 residues: MERYESLFIRLKERHEGAFVPFVTLGDPGIEQSLKIIDTLIEAGADALELGIPFSDPLADGPTIQNATLRAFAAGVTPAQCFEMLALIRQKHPTIPIGLLMYANLVFNKGVDEFYAQCEKVGVDSVLVADVPVEESAPFRQAALRHNVAPIFICPPNADDDLLRQIASYGRGYTYLLSRAGVTGAENRAALPLNHLVTKLKEYNAAPPLQGFGISAPDQVKAAIDAGAAGAISGSAIVKIIEQHINEPEKMLAALKAFVQPMKAATRS.

Active-site proton acceptor residues include E49 and D60.

The protein belongs to the TrpA family. As to quaternary structure, tetramer of two alpha and two beta chains.

It catalyses the reaction (1S,2R)-1-C-(indol-3-yl)glycerol 3-phosphate + L-serine = D-glyceraldehyde 3-phosphate + L-tryptophan + H2O. It functions in the pathway amino-acid biosynthesis; L-tryptophan biosynthesis; L-tryptophan from chorismate: step 5/5. In terms of biological role, the alpha subunit is responsible for the aldol cleavage of indoleglycerol phosphate to indole and glyceraldehyde 3-phosphate. The protein is Tryptophan synthase alpha chain of Escherichia coli O7:K1 (strain IAI39 / ExPEC).